Consider the following 223-residue polypeptide: Phosphoribosylformylglycinamidine synthase subunit PurQ (223 aa).

The Glutamine amidotransferase type-1 domain maps to Phe-3–Val-223. Catalysis depends on Cys-85, which acts as the Nucleophile. Active-site residues include His-193 and Glu-195.

In terms of assembly, part of the FGAM synthase complex composed of 1 PurL, 1 PurQ and 2 PurS subunits.

The protein localises to the cytoplasm. It carries out the reaction N(2)-formyl-N(1)-(5-phospho-beta-D-ribosyl)glycinamide + L-glutamine + ATP + H2O = 2-formamido-N(1)-(5-O-phospho-beta-D-ribosyl)acetamidine + L-glutamate + ADP + phosphate + H(+). The enzyme catalyses L-glutamine + H2O = L-glutamate + NH4(+). It participates in purine metabolism; IMP biosynthesis via de novo pathway; 5-amino-1-(5-phospho-D-ribosyl)imidazole from N(2)-formyl-N(1)-(5-phospho-D-ribosyl)glycinamide: step 1/2. Its function is as follows. Part of the phosphoribosylformylglycinamidine synthase complex involved in the purines biosynthetic pathway. Catalyzes the ATP-dependent conversion of formylglycinamide ribonucleotide (FGAR) and glutamine to yield formylglycinamidine ribonucleotide (FGAM) and glutamate. The FGAM synthase complex is composed of three subunits. PurQ produces an ammonia molecule by converting glutamine to glutamate. PurL transfers the ammonia molecule to FGAR to form FGAM in an ATP-dependent manner. PurS interacts with PurQ and PurL and is thought to assist in the transfer of the ammonia molecule from PurQ to PurL. The polypeptide is Phosphoribosylformylglycinamidine synthase subunit PurQ (Staphylococcus aureus (strain MSSA476)).